The primary structure comprises 545 residues: MVSLLRCQSFKPSSSLICSLALSAAFALSSSAFAEETKPAENKPATPVVSPPKATAQPANKNQVRFTKTGTFDGDSVVKLARKLASKPYVVLKDPLPAGLAKLTYDEYRDIRFNPISSIWRDQGLPFQMQMFHRGFYFQDLIEIAIVEANQATHLAYEPKYFTAGEVITQALPNDDIGYSGFRIHNQLNTNGVYDELMVFQGASYFRALGKGNSYGLSARGLALKTADPEGEEFPIFRAFWVERPSYDSNLIVVHALLDSPSVAGAYRFSVRPGDNTQIDVEATLFPRVELSKVGLAPSTSMFLHSLNGRHDTDDFRPEVHDSDGLLMFNGRGEHLWRPLANPRQLQVSAFSDNSPQGFGLIQRERNYASYQDLEAHYERRPSLWIEPVGNWGQGAVVLTEIPTESEIHDNIVSFWKPRQPIPAGSEYHFAYRMSWGEEPVAKTNSVVVSRTASGRADIAKATPRRLFVVDYHLNGAMPDELPLAKVESSGGVISNVVIARNAANNGYRLAFELEPEDKELIELRAELKFSTPRQVETWLYRWTL.

An N-terminal signal peptide occupies residues M1 to A34. Residues K38–N60 form a disordered region.

Belongs to the OpgD/OpgG family.

It localises to the periplasm. The protein operates within glycan metabolism; osmoregulated periplasmic glucan (OPG) biosynthesis. Its function is as follows. Involved in the biosynthesis of osmoregulated periplasmic glucans (OPGs). In Shewanella sp. (strain ANA-3), this protein is Glucans biosynthesis protein G.